The sequence spans 180 residues: Large ribosomal subunit protein uL6 (180 aa).

This sequence belongs to the universal ribosomal protein uL6 family. In terms of assembly, part of the 50S ribosomal subunit.

Its function is as follows. This protein binds to the 23S rRNA, and is important in its secondary structure. It is located near the subunit interface in the base of the L7/L12 stalk, and near the tRNA binding site of the peptidyltransferase center. This is Large ribosomal subunit protein uL6 from Thermoanaerobacter sp. (strain X514).